A 429-amino-acid polypeptide reads, in one-letter code: Histidine--tRNA ligase (429 aa).

The protein belongs to the class-II aminoacyl-tRNA synthetase family. Homodimer.

It is found in the cytoplasm. It carries out the reaction tRNA(His) + L-histidine + ATP = L-histidyl-tRNA(His) + AMP + diphosphate + H(+). The protein is Histidine--tRNA ligase of Pelodictyon phaeoclathratiforme (strain DSM 5477 / BU-1).